The following is a 319-amino-acid chain: Acetyl-coenzyme A carboxylase carboxyl transferase subunit alpha (319 aa).

Residues 35 to 296 form the CoA carboxyltransferase C-terminal domain; sequence NIDEEVHRLR…KAQLLADLAD (262 aa).

Belongs to the AccA family. Acetyl-CoA carboxylase is a heterohexamer composed of biotin carboxyl carrier protein (AccB), biotin carboxylase (AccC) and two subunits each of ACCase subunit alpha (AccA) and ACCase subunit beta (AccD).

It localises to the cytoplasm. The catalysed reaction is N(6)-carboxybiotinyl-L-lysyl-[protein] + acetyl-CoA = N(6)-biotinyl-L-lysyl-[protein] + malonyl-CoA. Its pathway is lipid metabolism; malonyl-CoA biosynthesis; malonyl-CoA from acetyl-CoA: step 1/1. Component of the acetyl coenzyme A carboxylase (ACC) complex. First, biotin carboxylase catalyzes the carboxylation of biotin on its carrier protein (BCCP) and then the CO(2) group is transferred by the carboxyltransferase to acetyl-CoA to form malonyl-CoA. The chain is Acetyl-coenzyme A carboxylase carboxyl transferase subunit alpha from Escherichia coli O139:H28 (strain E24377A / ETEC).